The primary structure comprises 199 residues: dITP/XTP pyrophosphatase (199 aa).

8–13 (TSNINK) provides a ligand contact to substrate. D68 functions as the Proton acceptor in the catalytic mechanism. D68 lines the Mg(2+) pocket. Substrate-binding positions include S69, 155–158 (FGYD), K177, and 182–183 (HR).

This sequence belongs to the HAM1 NTPase family. As to quaternary structure, homodimer. Mg(2+) serves as cofactor.

The enzyme catalyses XTP + H2O = XMP + diphosphate + H(+). It catalyses the reaction dITP + H2O = dIMP + diphosphate + H(+). It carries out the reaction ITP + H2O = IMP + diphosphate + H(+). In terms of biological role, pyrophosphatase that catalyzes the hydrolysis of nucleoside triphosphates to their monophosphate derivatives, with a high preference for the non-canonical purine nucleotides XTP (xanthosine triphosphate), dITP (deoxyinosine triphosphate) and ITP. Seems to function as a house-cleaning enzyme that removes non-canonical purine nucleotides from the nucleotide pool, thus preventing their incorporation into DNA/RNA and avoiding chromosomal lesions. This is dITP/XTP pyrophosphatase from Borrelia duttonii (strain Ly).